The chain runs to 258 residues: Trans-aconitate 2-methyltransferase (258 aa).

It belongs to the methyltransferase superfamily. Tam family.

The protein resides in the cytoplasm. It catalyses the reaction trans-aconitate + S-adenosyl-L-methionine = (E)-3-(methoxycarbonyl)pent-2-enedioate + S-adenosyl-L-homocysteine. Catalyzes the S-adenosylmethionine monomethyl esterification of trans-aconitate. In Yersinia pestis bv. Antiqua (strain Antiqua), this protein is Trans-aconitate 2-methyltransferase.